We begin with the raw amino-acid sequence, 250 residues long: Small ribosomal subunit protein uS2 (250 aa).

It belongs to the universal ribosomal protein uS2 family.

This is Small ribosomal subunit protein uS2 from Acidovorax sp. (strain JS42).